A 292-amino-acid polypeptide reads, in one-letter code: Probable alpha-L-glutamate ligase (292 aa).

Positions 104 to 287 constitute an ATP-grasp domain; the sequence is HQLLAAKGID…VATRIIEHVE (184 aa). Residues Lys141, 178–179, Asp187, and 211–213 each bind ATP; these read EF and RSN. Residues Asp248, Glu260, and Asn262 each coordinate Mg(2+). 3 residues coordinate Mn(2+): Asp248, Glu260, and Asn262.

Belongs to the RimK family. Mg(2+) serves as cofactor. Mn(2+) is required as a cofactor.

This is Probable alpha-L-glutamate ligase from Stenotrophomonas maltophilia (strain K279a).